Reading from the N-terminus, the 233-residue chain is Ribonuclease 3 (233 aa).

An RNase III domain is found at 4-126; sequence LNKLMERLGH…IVGAIYIDAG (123 aa). Residue Glu-39 participates in Mg(2+) binding. Asp-43 is an active-site residue. Positions 112 and 115 each coordinate Mg(2+). Residue Glu-115 is part of the active site. A DRBM domain is found at 153 to 222; sequence DAKSLLQEWL…AKRFLELLDD (70 aa).

The protein belongs to the ribonuclease III family. Homodimer. It depends on Mg(2+) as a cofactor.

The protein resides in the cytoplasm. The catalysed reaction is Endonucleolytic cleavage to 5'-phosphomonoester.. Digests double-stranded RNA. Involved in the processing of primary rRNA transcript to yield the immediate precursors to the large and small rRNAs (23S and 16S). Processes some mRNAs, and tRNAs when they are encoded in the rRNA operon. Processes pre-crRNA and tracrRNA of type II CRISPR loci if present in the organism. The protein is Ribonuclease 3 of Coxiella burnetii (strain Dugway 5J108-111).